The primary structure comprises 589 residues: Proline--tRNA ligase (589 aa).

It belongs to the class-II aminoacyl-tRNA synthetase family. ProS type 1 subfamily. As to quaternary structure, homodimer.

It localises to the cytoplasm. It catalyses the reaction tRNA(Pro) + L-proline + ATP = L-prolyl-tRNA(Pro) + AMP + diphosphate. Functionally, catalyzes the attachment of proline to tRNA(Pro) in a two-step reaction: proline is first activated by ATP to form Pro-AMP and then transferred to the acceptor end of tRNA(Pro). As ProRS can inadvertently accommodate and process non-cognate amino acids such as alanine and cysteine, to avoid such errors it has two additional distinct editing activities against alanine. One activity is designated as 'pretransfer' editing and involves the tRNA(Pro)-independent hydrolysis of activated Ala-AMP. The other activity is designated 'posttransfer' editing and involves deacylation of mischarged Ala-tRNA(Pro). The misacylated Cys-tRNA(Pro) is not edited by ProRS. The chain is Proline--tRNA ligase from Nocardioides sp. (strain ATCC BAA-499 / JS614).